A 914-amino-acid chain; its full sequence is PHD finger protein 14 (914 aa).

A disordered region spans residues 19–276; the sequence is DALDYDSSDD…EDSLLERPQT (258 aa). Residues 53–68 show a composition bias toward low complexity; that stretch reads ESAAGSESDSDAAAAS. Over residues 90–102 the composition is skewed to basic and acidic residues; that stretch reads EKVKESFSEETSS. Acidic residues-rich tracts occupy residues 155–168 and 191–233; these read ELNE…EDDN and GEED…DSEE. The segment at 285 to 346 adopts a PHD-type 1 zinc-finger fold; it reads ILICCVCLGD…PWFCDACKNG (62 aa). Cys-288, Cys-291, Cys-305, Cys-308, His-313, Cys-316, Cys-340, Cys-343, Cys-351, Cys-354, His-371, Cys-374, Cys-407, Cys-410, Cys-424, Cys-429, His-434, Cys-437, Cys-461, and His-464 together coordinate Zn(2+). The C2HC pre-PHD-type zinc-finger motif lies at 348 to 381; sequence SPSCELCPSQDGIFKETDAGRWVHVVCALYVPGV. The PHD-type 2 zinc finger occupies 405–465; the sequence is KECSLCEDTR…PFFAYCKQHA (61 aa). Residues 596–644 adopt a coiled-coil conformation; it reads MIQIQDNIVEQKNLKDKLESEQEKLHMEYDKLCESLEDLQNVNGQLRTE. Residues 692 to 746 form a PHD-type 3 zinc finger; it reads LYSCGICKKNQDQHLLLLCDTCKLHYHLGCLDPPLTRMPKKTKNSYWQCSECDQA. Zn(2+)-binding residues include Cys-695, Cys-698, Cys-710, Cys-713, His-718, Cys-721, Cys-740, and Cys-743. The disordered stretch occupies residues 777-838; sequence PQEMSPEPKK…PKADDTRTEC (62 aa). Basic residues predominate over residues 792 to 802; the sequence is TRTRGQKRKRM. The segment covering 803–817 has biased composition (basic and acidic residues); that stretch reads SICEEEKMEEPLPRE. The PHD-type 4 zinc-finger motif lies at 835 to 888; the sequence is RTECTTCKGPGDNENLVRCDECRLCYHFGCLDPPLKKSPKQTGYGWICQECDTS. Cys-838, Cys-841, Cys-853, Cys-856, His-861, Cys-864, Cys-882, and Cys-885 together coordinate Zn(2+). The tract at residues 887 to 914 is disordered; the sequence is TSSSKEEEAQEVEEESVNEETAEQEIPD. Residues 894-914 show a composition bias toward acidic residues; sequence EAQEVEEESVNEETAEQEIPD.

Interacts with histone H3.

It localises to the nucleus. Histone-binding protein. Binds preferentially to unmodified histone H3 but can also bind to a lesser extent to histone H3 trimethylated at 'Lys-9' (H3K9me3) as well as to histone H3 monomethylated at 'Lys-27' (H3K27ac) and trimethylated at 'Lys-27' (H3K27me3). Represses PDGFRA expression, thus playing a role in regulation of mesenchymal cell proliferation. This Danio rerio (Zebrafish) protein is PHD finger protein 14.